A 188-amino-acid polypeptide reads, in one-letter code: V-type proton ATPase subunit E (188 aa).

This sequence belongs to the V-ATPase E subunit family.

Its function is as follows. Produces ATP from ADP in the presence of a proton gradient across the membrane. The sequence is that of V-type proton ATPase subunit E from Dictyoglomus turgidum (strain DSM 6724 / Z-1310).